We begin with the raw amino-acid sequence, 232 residues long: UPF0502 protein Aave_3438 (232 aa).

Belongs to the UPF0502 family.

The sequence is that of UPF0502 protein Aave_3438 from Paracidovorax citrulli (strain AAC00-1) (Acidovorax citrulli).